A 368-amino-acid chain; its full sequence is ATP-dependent (S)-NAD(P)H-hydrate dehydratase (368 aa).

The region spanning 13 to 357 is the YjeF C-terminal domain; the sequence is LFKKVRKIVP…DEVHESFLEL (345 aa). (6S)-NADPHX contacts are provided by residues Gly125 and 178–184; that span reads NVNEFSR. ATP is bound by residues 231-235 and 250-259; these read KGPHD and GGLKRSGGQG. Residue Asp260 participates in (6S)-NADPHX binding.

It belongs to the NnrD/CARKD family. The cofactor is Mg(2+).

It is found in the cytoplasm. It carries out the reaction (6S)-NADHX + ATP = ADP + phosphate + NADH + H(+). The catalysed reaction is (6S)-NADPHX + ATP = ADP + phosphate + NADPH + H(+). Functionally, catalyzes the dehydration of the S-form of NAD(P)HX at the expense of ATP, which is converted to ADP. Together with NAD(P)HX epimerase, which catalyzes the epimerization of the S- and R-forms, the enzyme allows the repair of both epimers of NAD(P)HX, a damaged form of NAD(P)H that is a result of enzymatic or heat-dependent hydration. The polypeptide is ATP-dependent (S)-NAD(P)H-hydrate dehydratase (Aspergillus fumigatus (strain ATCC MYA-4609 / CBS 101355 / FGSC A1100 / Af293) (Neosartorya fumigata)).